A 334-amino-acid chain; its full sequence is Cobalt-precorrin-5B C(1)-methyltransferase (334 aa).

Belongs to the CbiD family.

The catalysed reaction is Co-precorrin-5B + S-adenosyl-L-methionine = Co-precorrin-6A + S-adenosyl-L-homocysteine. It functions in the pathway cofactor biosynthesis; adenosylcobalamin biosynthesis; cob(II)yrinate a,c-diamide from sirohydrochlorin (anaerobic route): step 6/10. In terms of biological role, catalyzes the methylation of C-1 in cobalt-precorrin-5B to form cobalt-precorrin-6A. The protein is Cobalt-precorrin-5B C(1)-methyltransferase of Methanoregula boonei (strain DSM 21154 / JCM 14090 / 6A8).